The primary structure comprises 173 residues: Shikimate kinase 1 (173 aa).

14 to 19 (GAGKST) is an ATP binding site. Ser18 serves as a coordination point for Mg(2+). Residues Asp36, Arg60, and Gly82 each contribute to the substrate site. Arg120 contacts ATP. Arg140 contacts substrate. Gln157 contacts ATP.

This sequence belongs to the shikimate kinase family. As to quaternary structure, monomer. It depends on Mg(2+) as a cofactor.

Its subcellular location is the cytoplasm. The enzyme catalyses shikimate + ATP = 3-phosphoshikimate + ADP + H(+). Its pathway is metabolic intermediate biosynthesis; chorismate biosynthesis; chorismate from D-erythrose 4-phosphate and phosphoenolpyruvate: step 5/7. Catalyzes the specific phosphorylation of the 3-hydroxyl group of shikimic acid using ATP as a cosubstrate. This Sodalis glossinidius (strain morsitans) protein is Shikimate kinase 1.